The following is a 128-amino-acid chain: MPKKIIVPVGTSKPIAPFSPGTLADGVVYVSGTLPFDKDNNVVHVGDASAQTRHVLETIKSVIETAGGTMEDVTMNHIFITDWANYQAVNTVYAEYFPGDKPARYCIQCGLVKPDALVEIATVAHIGK.

It belongs to the RutC family.

It carries out the reaction (Z)-3-aminoacrylate + H2O + H(+) = 3-oxopropanoate + NH4(+). Involved in pyrimidine catabolism. Catalyzes the deamination of 3-aminoacrylate to malonic semialdehyde, a reaction that can also occur spontaneously. RutC may facilitate the reaction and modulate the metabolic fitness, rather than catalyzing essential functions. This chain is 3-aminoacrylate deaminase RutC, found in Agrobacterium fabrum (strain C58 / ATCC 33970) (Agrobacterium tumefaciens (strain C58)).